Reading from the N-terminus, the 101-residue chain is NADH-quinone oxidoreductase subunit K (101 aa).

The next 3 helical transmembrane spans lie at 4–24 (LAHY…GIFL), 30–50 (IIIL…FVAF), and 61–81 (IFVF…LAIL).

The protein belongs to the complex I subunit 4L family. As to quaternary structure, NDH-1 is composed of 14 different subunits. Subunits NuoA, H, J, K, L, M, N constitute the membrane sector of the complex.

It is found in the cell inner membrane. The enzyme catalyses a quinone + NADH + 5 H(+)(in) = a quinol + NAD(+) + 4 H(+)(out). In terms of biological role, NDH-1 shuttles electrons from NADH, via FMN and iron-sulfur (Fe-S) centers, to quinones in the respiratory chain. The immediate electron acceptor for the enzyme in this species is believed to be ubiquinone. Couples the redox reaction to proton translocation (for every two electrons transferred, four hydrogen ions are translocated across the cytoplasmic membrane), and thus conserves the redox energy in a proton gradient. The protein is NADH-quinone oxidoreductase subunit K of Burkholderia cenocepacia (strain HI2424).